The following is a 108-amino-acid chain: Phosphocarrier protein HPr (108 aa).

One can recognise an HPr domain in the interval 21–108 (ELQATCIVKN…DAFSSGFGEL (88 aa)). Residue histidine 35 is the Pros-phosphohistidine intermediate of the active site.

This sequence belongs to the HPr family.

It localises to the cytoplasm. Functionally, general (non sugar-specific) component of the phosphoenolpyruvate-dependent sugar phosphotransferase system (sugar PTS). This major carbohydrate active-transport system catalyzes the phosphorylation of incoming sugar substrates concomitantly with their translocation across the cell membrane. The phosphoryl group from phosphoenolpyruvate (PEP) is transferred to the phosphoryl carrier protein HPr by enzyme I. Phospho-HPr then transfers it to the PTS EIIA domain. The chain is Phosphocarrier protein HPr (ptsH) from Chlamydia pneumoniae (Chlamydophila pneumoniae).